We begin with the raw amino-acid sequence, 655 residues long: Alpha-L-iduronidase (655 aa).

The signal sequence occupies residues 1–25 (MRPPGPRAPGLALLAALLAAPRALA). 3 residues coordinate alpha-D-mannopyranose: Pro53, Leu55, and His57. An alpha-L-iduronate-binding site is contributed by His90. Residue Asn109 is glycosylated (N-linked (GlcNAc...) asparagine). Alpha-L-iduronate is bound by residues Asn180 and Glu181. The Proton donor role is filled by Glu181. N-linked (GlcNAc...) asparagine glycosylation is found at Asn189 and Asn242. Positions 263, 298, and 304 each coordinate alpha-L-iduronate. Glu298 serves as the catalytic Nucleophile. Trp305 contacts alpha-D-mannopyranose. Asn335 carries N-linked (GlcNAc...) asparagine glycosylation. Alpha-L-iduronate is bound by residues Asp348 and Arg362. N-linked (GlcNAc...) asparagine glycosylation is found at Asn371 and Asn414. Cys540 and Cys576 form a disulfide bridge.

Belongs to the glycosyl hydrolase 39 family. Monomer. In terms of processing, a smaller 63 kDa protein probably arises from IDUA protein by proteolytic cleavage. Post-translationally, N-glycosylation contributes to substrate binding and is required for full enzymatic activity. Detected in testis (at protein level). Expressed ubiquitously.

Its subcellular location is the lysosome. It catalyses the reaction Hydrolysis of unsulfated alpha-L-iduronosidic linkages in dermatan sulfate.. This is Alpha-L-iduronidase (IDUA) from Canis lupus familiaris (Dog).